An 826-amino-acid chain; its full sequence is Arsenite oxidase subunit AioA (826 aa).

3 residues coordinate [3Fe-4S] cluster: cysteine 22, cysteine 25, and cysteine 29. Substrate is bound by residues histidine 196, glutamate 204, arginine 419, and histidine 423.

This sequence belongs to the prokaryotic molybdopterin-containing oxidoreductase family. Heterodimer consisting of a large and a small subunit. Requires [3Fe-4S] cluster as cofactor. Mo-bis(molybdopterin guanine dinucleotide) is required as a cofactor.

The catalysed reaction is 2 oxidized [azurin] + arsenite + H2O = 2 reduced [azurin] + arsenate + 3 H(+). Functionally, involved in the detoxification of arsenic. Oxidizes As(III)O3(3-) (arsenite) to the somewhat less toxic As(V)O4(3-) (arsenate). The sequence is that of Arsenite oxidase subunit AioA (aioA) from Herminiimonas arsenicoxydans.